Here is a 236-residue protein sequence, read N- to C-terminus: Glucosamine-6-phosphate deaminase (236 aa).

Residue Asp62 is the Proton acceptor; for enolization step of the active site. Asn128 functions as the For ring-opening step in the catalytic mechanism. The active-site Proton acceptor; for ring-opening step is the His130. Residue Glu135 is the For ring-opening step of the active site.

The protein belongs to the glucosamine/galactosamine-6-phosphate isomerase family. NagB subfamily.

The catalysed reaction is alpha-D-glucosamine 6-phosphate + H2O = beta-D-fructose 6-phosphate + NH4(+). It functions in the pathway amino-sugar metabolism; N-acetylneuraminate degradation; D-fructose 6-phosphate from N-acetylneuraminate: step 5/5. In terms of biological role, catalyzes the reversible isomerization-deamination of glucosamine 6-phosphate (GlcN6P) to form fructose 6-phosphate (Fru6P) and ammonium ion. The polypeptide is Glucosamine-6-phosphate deaminase (Pediococcus pentosaceus (strain ATCC 25745 / CCUG 21536 / LMG 10740 / 183-1w)).